The sequence spans 492 residues: Transmembrane protease serine 2 (492 aa).

Residues 1-84 (MALNSGSPPA…TVCTSKTKKA (84 aa)) lie on the Cytoplasmic side of the membrane. The chain crosses the membrane as a helical; Signal-anchor for type II membrane protein span at residues 85–105 (LCITLTLGTFLVGAALAAGLL). The Extracellular portion of the chain corresponds to 106 to 492 (WKFMGSKCSN…WIYRQMRADG (387 aa)). 9 cysteine pairs are disulfide-bonded: Cys113–Cys126, Cys120–Cys139, Cys133–Cys148, Cys172–Cys231, Cys185–Cys241, Cys244–Cys365, Cys281–Cys297, Cys410–Cys426, and Cys437–Cys465. In terms of domain architecture, LDL-receptor class A spans 118–148 (IECDSSGTCINPSNWCDGVSHCPGGEDENRC). Asn131, Asp134, Val136, Asp144, and Glu145 together coordinate Ca(2+). In terms of domain architecture, SRCR spans 149 to 242 (VRLYGPNFIL…SKAVVSLRCI (94 aa)). Residues Asn213 and Asn249 are each glycosylated (N-linked (GlcNAc...) asparagine). In terms of domain architecture, Peptidase S1 spans 256–492 (IVGGESALPG…WIYRQMRADG (237 aa)). Catalysis depends on charge relay system residues His296 and Asp345. Residues 340 to 470 (KTKNNDIALM…WGSGCAKAYR (131 aa)) are HKU1-CoV S protein-binding. The Charge relay system role is filled by Ser441.

The protein belongs to the peptidase S1 family. In terms of assembly, the catalytically active form interacts with ACE2. Proteolytically processed; by an autocatalytic mechanism. Autocleavage induces active conformation. Expressed in several tissues that comprise large populations of epithelial cells with the highest level of transcripts measured in the prostate gland. Expressed in type II pneumocytes in the lung (at protein level). Expressed strongly in small intestine. Also expressed in colon, stomach and salivary gland. Coexpressed with ACE2 within lung type II pneumocytes, ileal absorptive enterocytes, intestinal epithelial cells, cornea, gallbladder and nasal goblet secretory cells.

The protein resides in the cell membrane. It localises to the secreted. The catalysed reaction is The enzyme cleaves angiotensin-converting enzyme 2 (EC 3.4.17.23) and cleaves influenzea A and B virus and coronavirus spike glycoproteins at arginine residues.. Plasma membrane-anchored serine protease that cleaves at arginine residues. Participates in proteolytic cascades of relevance for the normal physiologic function of the prostate. Androgen-induced TMPRSS2 activates several substrates that include pro-hepatocyte growth factor/HGF, the protease activated receptor-2/F2RL1 or matriptase/ST14 leading to extracellular matrix disruption and metastasis of prostate cancer cells. In addition, activates trigeminal neurons and contribute to both spontaneous pain and mechanical allodynia. Functionally, (Microbial infection) Facilitates human coronaviruses SARS-CoV and SARS-CoV-2 infections via two independent mechanisms, proteolytic cleavage of ACE2 receptor which promotes viral uptake, and cleavage of coronavirus spike glycoproteins which activates the glycoprotein for host cell entry. The cleavage of SARS-COV2 spike glycoprotein occurs between the S2 and S2' site. Upon SARS-CoV-2 infection, increases syncytia formation by accelerating the fusion process. Proteolytically cleaves and activates the spike glycoproteins of human coronavirus 229E (HCoV-229E) and human coronavirus EMC (HCoV-EMC) and the fusion glycoproteins F0 of Sendai virus (SeV), human metapneumovirus (HMPV), human parainfluenza 1, 2, 3, 4a and 4b viruses (HPIV). Essential for spread and pathogenesis of influenza A virus (strains H1N1, H3N2 and H7N9); involved in proteolytic cleavage and activation of hemagglutinin (HA) protein which is essential for viral infectivity. In terms of biological role, (Microbial infection) Receptor for human coronavirus HKU1-CoV, acts synergistically with disialoside glycans to facilitate the entry of the virus. After binding to cell-surface disialoside glycans, the viral S protein interacts with the inactive form of TMPRSS2 and inhibits its protease activity. The sequence is that of Transmembrane protease serine 2 from Homo sapiens (Human).